The primary structure comprises 208 residues: Cysteine-rich protein 2 (208 aa).

One can recognise an LIM zinc-binding 1 domain in the interval 5 to 57; it reads CPKCDKTVYFAEKVSSLGKDWHKFCLKCERCNKTLTPGGHAEHDGKPFCHKPC. Lysine 23 carries the N6-acetyllysine modification. Serine 104 carries the post-translational modification Phosphoserine. An LIM zinc-binding 2 domain is found at 126–178; it reads CPRCNKRVYFAEKVTSLGKDWHRPCLRCERCSKTLTPGGHAEHDGQPYCHKPC. An N6-acetyllysine mark is found at lysine 138 and lysine 144.

In terms of assembly, interacts with TGFB1I1.

In Mus musculus (Mouse), this protein is Cysteine-rich protein 2 (Crip2).